Reading from the N-terminus, the 428-residue chain is Peptidase B (428 aa).

Positions 195 and 200 each coordinate Mn(2+). Lys207 is an active-site residue. Residues Asp218, Asp277, and Glu279 each contribute to the Mn(2+) site. The active site involves Arg281.

The protein belongs to the peptidase M17 family. In terms of assembly, homohexamer. Mn(2+) serves as cofactor.

The protein resides in the cytoplasm. The catalysed reaction is Release of an N-terminal amino acid, Xaa, from a peptide or arylamide. Xaa is preferably Glu or Asp but may be other amino acids, including Leu, Met, His, Cys and Gln.. Functionally, probably plays an important role in intracellular peptide degradation. The polypeptide is Peptidase B (Cronobacter sakazakii (strain ATCC BAA-894) (Enterobacter sakazakii)).